The following is a 324-amino-acid chain: Phospho-N-acetylmuramoyl-pentapeptide-transferase (324 aa).

The next 10 membrane-spanning stretches (helical) occupy residues 5-25 (VILF…PILI), 50-70 (GTPT…TIVM), 77-97 (ISPE…LGFL), 117-137 (LIGQ…YNFA), 147-167 (LSFD…VGGS), 176-196 (LDGL…ILAW), 203-223 (VAIF…FNAH), 227-247 (VFMG…IAIL), 250-270 (LEIL…SVIL), and 302-322 (VVVT…YIEV).

It belongs to the glycosyltransferase 4 family. MraY subfamily. It depends on Mg(2+) as a cofactor.

The protein resides in the cell membrane. It carries out the reaction UDP-N-acetyl-alpha-D-muramoyl-L-alanyl-gamma-D-glutamyl-meso-2,6-diaminopimeloyl-D-alanyl-D-alanine + di-trans,octa-cis-undecaprenyl phosphate = di-trans,octa-cis-undecaprenyl diphospho-N-acetyl-alpha-D-muramoyl-L-alanyl-D-glutamyl-meso-2,6-diaminopimeloyl-D-alanyl-D-alanine + UMP. Its pathway is cell wall biogenesis; peptidoglycan biosynthesis. Functionally, catalyzes the initial step of the lipid cycle reactions in the biosynthesis of the cell wall peptidoglycan: transfers peptidoglycan precursor phospho-MurNAc-pentapeptide from UDP-MurNAc-pentapeptide onto the lipid carrier undecaprenyl phosphate, yielding undecaprenyl-pyrophosphoryl-MurNAc-pentapeptide, known as lipid I. This chain is Phospho-N-acetylmuramoyl-pentapeptide-transferase, found in Bacillus subtilis (strain 168).